Reading from the N-terminus, the 394-residue chain is Carbamoyltransferase HypF homolog (394 aa).

The protein belongs to the carbamoyltransferase HypF family.

This chain is Carbamoyltransferase HypF homolog (hypF1), found in Cupriavidus necator (strain ATCC 17699 / DSM 428 / KCTC 22496 / NCIMB 10442 / H16 / Stanier 337) (Ralstonia eutropha).